Here is a 648-residue protein sequence, read N- to C-terminus: Forkhead box protein N1 (648 aa).

A disordered region spans residues 1–95 (MVSLLPPQSD…PGPGSFRLSP (95 aa)). Polar residues predominate over residues 38 to 50 (APQNKHANFSCSS). A compositionally biased stretch (pro residues) spans 54 to 67 (DGPPERTPSLPPHS). Residues 271 to 367 (KPIYSYSILI…EELQKWKRKD (97 aa)) constitute a DNA-binding region (fork-head). 3 disordered regions span residues 392–432 (LGSP…APGP), 457–521 (HLSP…TLLP), and 629–648 (SAAAGPAVYLSPGSKPLALA). Over residues 398 to 412 (GCPPPGLAGPGPIRP) the composition is skewed to pro residues.

As to expression, bone marrow (at protein level). Expressed in thymus and skin.

It is found in the nucleus. Transcriptional regulator which regulates the development, differentiation, and function of thymic epithelial cells (TECs) both in the prenatal and postnatal thymus. Acts as a master regulator of the TECs lineage development and is required from the onset of differentiation in progenitor TECs in the developing fetus to the final differentiation steps through which TECs mature to acquire their full functionality. Regulates, either directly or indirectly the expression of a variety of genes that mediate diverse aspects of thymus development and function, including MHC Class II, DLL4, CCL25, CTSL, CD40 and PAX1. Regulates the differentiation of the immature TECs into functional cortical TECs (cTECs) and medullary TECs (mTECs). Essential for maintenance of mTECs population in the postnatal thymus. Involved in the morphogenesis and maintenance of the three-dimensional thymic microstructure which is necessary for a fully functional thymus. Plays an important role in the maintenance of hematopoiesis and particularly T lineage progenitors within the bone marrow niche with age. Essential for the vascularization of the thymus anlage. Promotes the terminal differentiation of epithelial cells in the epidermis and hair follicles, partly by negatively regulating the activity of protein kinase C. In Mus musculus (Mouse), this protein is Forkhead box protein N1 (Foxn1).